The chain runs to 327 residues: MSEIKTDDPKRGIKLRGADKTARIPIKVVPLQEKLKKPEWIRAKLPSRKFFEIKDILREQKMHTVCEEASCPNIGECFSKGTATFMIMGDICTRRCPFCDVGHGRPNMLDPDEPKNLAESVKAMNLRYVVITSVDRDDLRDGGAQHFADCIKAIRETSPNTKIEILVPDFRGRLDIALKILAETPPDVMNHNLETHPSLYRKARPGANYQHSLDLLKRYKEMMPHIPTKSGIMVGLGETDEDVREIMRDMRAHNIEMITIGQYLQPSDGHLPVLRYVTPEQFKIFEKEAYELGFTNAAIGAMVRSSYHADEQAAEALRESHGGCGHH.

The [4Fe-4S] cluster site is built by Cys-66, Cys-71, Cys-77, Cys-92, Cys-96, Cys-99, and Ser-306. Residues 78–295 (FSKGTATFMI…EKEAYELGFT (218 aa)) form the Radical SAM core domain.

It belongs to the radical SAM superfamily. Lipoyl synthase family. [4Fe-4S] cluster is required as a cofactor.

Its subcellular location is the cytoplasm. It carries out the reaction [[Fe-S] cluster scaffold protein carrying a second [4Fe-4S](2+) cluster] + N(6)-octanoyl-L-lysyl-[protein] + 2 oxidized [2Fe-2S]-[ferredoxin] + 2 S-adenosyl-L-methionine + 4 H(+) = [[Fe-S] cluster scaffold protein] + N(6)-[(R)-dihydrolipoyl]-L-lysyl-[protein] + 4 Fe(3+) + 2 hydrogen sulfide + 2 5'-deoxyadenosine + 2 L-methionine + 2 reduced [2Fe-2S]-[ferredoxin]. It participates in protein modification; protein lipoylation via endogenous pathway; protein N(6)-(lipoyl)lysine from octanoyl-[acyl-carrier-protein]: step 2/2. In terms of biological role, catalyzes the radical-mediated insertion of two sulfur atoms into the C-6 and C-8 positions of the octanoyl moiety bound to the lipoyl domains of lipoate-dependent enzymes, thereby converting the octanoylated domains into lipoylated derivatives. The sequence is that of Lipoyl synthase from Neisseria gonorrhoeae (strain ATCC 700825 / FA 1090).